Reading from the N-terminus, the 376-residue chain is Chlorophyll synthase, chloroplastic (376 aa).

The N-terminal 47 residues, 1–47 (MATSHLLAAASSTAASSATFRPPLLSLRSPPPSSLRLNRRRHFQVVR), are a transit peptide targeting the chloroplast. Residues 48 to 69 (AAETDKETKANAPEKAPAGGSS) are disordered. 8 consecutive transmembrane segments (helical) span residues 95–115 (PVTW…SGNF), 171–191 (VITQ…LLDV), 197–217 (FPII…YSAP), 230–250 (FALG…LFGT), 255–275 (IVVL…VNDF), 300–320 (WICV…LFSS), 325–345 (YALA…QYFL), and 355–375 (YQAS…LATS).

It belongs to the UbiA prenyltransferase family. Chlorophyll synthase subfamily.

Its subcellular location is the plastid. It localises to the chloroplast membrane. It carries out the reaction phytyl diphosphate + chlorophyllide a + H(+) = chlorophyll a + diphosphate. Functionally, involved in one of the last steps of the biosynthesis of chlorophyll a. The chain is Chlorophyll synthase, chloroplastic (CHLG) from Oryza sativa subsp. japonica (Rice).